The primary structure comprises 238 residues: C-reactive protein (238 aa).

An N-terminal signal peptide occupies residues Met1–Ala16. A Pyrrolidone carboxylic acid modification is found at Gln17. The Pentraxin (PTX) domain occupies Val21–Cys223. An intrachain disulfide couples Cys52 to Cys113. Residues Asp76, Asn77, Glu154, Gln155, Asp156, and Gln166 each coordinate Ca(2+).

The protein belongs to the pentraxin family. Homodimer; disulfide-linked. It is not known if it assembles into a pentraxin (or pentaxin) structure. Pentaxins have a discoid arrangement of 5 non-covalently bound subunits. Requires Ca(2+) as cofactor. Cys-89 or Cys-223 or Cys-236 could be involved in interchain disulfide linkage.

The protein localises to the secreted. Its function is as follows. Displays several functions associated with host defense: it promotes agglutination, bacterial capsular swelling, phagocytosis, and complement fixation through its calcium-dependent binding to phosphorylcholine. The protein is C-reactive protein (crp) of Xenopus laevis (African clawed frog).